The chain runs to 1289 residues: uncharacterized protein (1289 aa).

Residues 615–733 (LDMYDVLKEL…DGMLSYSAQL (119 aa)) form the MHD1 domain. Positions 745-774 (DEPSYSLESSDTRSSLSLNNANVNHEKSRS) are disordered. A compositionally biased stretch (low complexity) spans 748–762 (SYSLESSDTRSSLSL). The 133-residue stretch at 834 to 966 (AQYHSSHNLE…DDGFPIDFSL (133 aa)) folds into the C2 domain. Positions 1044 to 1184 (YDAILPLFDY…KSVSELKDEV (141 aa)) constitute an MHD2 domain.

It localises to the cytoplasm. This is an uncharacterized protein from Saccharomyces cerevisiae (strain ATCC 204508 / S288c) (Baker's yeast).